The sequence spans 26 residues: Metallothionein (26 aa).

Positions 1-14 (MGDCGCSGASSCNC) are enriched in low complexity. Positions 1 to 26 (MGDCGCSGASSCNCGSGCSCSNCGSK) are disordered. 7 residues coordinate Cu(+): cysteine 4, cysteine 6, cysteine 12, cysteine 14, cysteine 18, cysteine 20, and cysteine 23. The segment covering 15-26 (GSGCSCSNCGSK) has biased composition (cys residues).

The protein belongs to the metallothionein superfamily. Type 8 family.

This chain is Metallothionein (cmt), found in Neurospora crassa (strain ATCC 24698 / 74-OR23-1A / CBS 708.71 / DSM 1257 / FGSC 987).